The chain runs to 546 residues: Chaperonin GroEL 4 (546 aa).

ATP contacts are provided by residues 30 to 33 (TLGP), lysine 51, 87 to 91 (DGTTT), glycine 415, and aspartate 496.

This sequence belongs to the chaperonin (HSP60) family. In terms of assembly, forms a cylinder of 14 subunits composed of two heptameric rings stacked back-to-back. Interacts with the co-chaperonin GroES.

The protein resides in the cytoplasm. It carries out the reaction ATP + H2O + a folded polypeptide = ADP + phosphate + an unfolded polypeptide.. Its function is as follows. Together with its co-chaperonin GroES, plays an essential role in assisting protein folding. The GroEL-GroES system forms a nano-cage that allows encapsulation of the non-native substrate proteins and provides a physical environment optimized to promote and accelerate protein folding. In Bradyrhizobium sp. (strain BTAi1 / ATCC BAA-1182), this protein is Chaperonin GroEL 4.